The chain runs to 339 residues: DNA-directed RNA polymerase subunit alpha (339 aa).

An alpha N-terminal domain (alpha-NTD) region spans residues 1–238; sequence MVDPIVTKNW…EQLSIFINFD (238 aa). Positions 250–339 are alpha C-terminal domain (alpha-CTD); the sequence is VEEQKLNENL…KAAPQGAPKV (90 aa).

It belongs to the RNA polymerase alpha chain family. As to quaternary structure, homodimer. The RNAP catalytic core consists of 2 alpha, 1 beta, 1 beta' and 1 omega subunit. When a sigma factor is associated with the core the holoenzyme is formed, which can initiate transcription.

The catalysed reaction is RNA(n) + a ribonucleoside 5'-triphosphate = RNA(n+1) + diphosphate. DNA-dependent RNA polymerase catalyzes the transcription of DNA into RNA using the four ribonucleoside triphosphates as substrates. The chain is DNA-directed RNA polymerase subunit alpha from Anaeromyxobacter dehalogenans (strain 2CP-C).